Here is a 1199-residue protein sequence, read N- to C-terminus: RNA-binding protein 20 (1199 aa).

Disordered stretches follow at residues 1–55 (MVLA…PQAS), 163–186 (PSTA…SLPS), and 320–346 (ERPP…PASQ). Low complexity predominate over residues 25-42 (VMPGVQGPSVPQGQQGMQ). The segment covering 43–52 (PLPPPPPPQP) has biased composition (pro residues). Residues 170 to 183 (SPPSQTGGPGPSVS) show a composition bias toward low complexity. The U1-type zinc finger occupies 410 to 444 (HLPHICSICDKKVFDLKDWELHVKGKLHAQKCLLF). An RRM domain is found at 520 to 595 (RVVHICNLPE…EKLLIRMSTR (76 aa)). Residues 626–636 (EADRYGPERPR) are compositionally biased toward basic and acidic residues. Disordered regions lie at residues 626-685 (EADR…NGED), 720-884 (REKY…YPTN), and 944-1077 (GETL…SQAC). Residues 630–649 (YGPERPRSRSPMSRSLSPRS) are RS. Residues Ser637, Ser639, Ser642, Ser644, and Ser651 each carry the phosphoserine modification. The segment covering 638–649 (RSPMSRSLSPRS) has biased composition (low complexity). Residues 667 to 685 (YAWRDEDRETVPRRENGED) show a composition bias toward basic and acidic residues. Position 728 is a phosphoserine (Ser728). Basic and acidic residues-rich tracts occupy residues 739–758 (KGRE…DKYP), 770–831 (RKEE…KESQ), and 859–868 (ENTRTKKGQD). Ser787 carries the phosphoserine modification. A phosphoserine mark is found at Ser871, Ser873, and Ser955. The span at 962–971 (VPSTSASCPN) shows a compositional bias: polar residues. Phosphoserine occurs at positions 991, 1026, 1038, 1049, 1054, 1058, 1070, 1088, and 1093. A compositionally biased stretch (basic and acidic residues) spans 1042–1055 (DDCKARGSPEDGSH). Polar residues predominate over residues 1067-1077 (PTESDLQSQAC). Residues 1133–1164 (FYCKLCGLFYTSEEAAKVSHCRSTVHYRNLQK) form a Matrin-type zinc finger. Positions 1172-1199 (EGLKETEGTDSPSPERGGIGPHLERKKL) are disordered. Ser1182 and Ser1184 each carry phosphoserine.

As to quaternary structure, associates with components of the U1 and U2 U1 small nuclear ribonucleoprotein complexes. Post-translationally, phosphorylation regulates the subcellular localization. Phosphorylation of Ser-637 and Ser-639 in the RS (arginine/serine-rich) region promotes nuclear localization of the protein. In contrast, phosphorylation of the C-terminal disordered region promotes localization to cytoplasmic ribonucleoprotein granules. Predominantly expressed in striated muscle, with highest expression in the heart. In differentiating myoblasts, expression correlates with sarcomere assembly: expression peaks when alpha-actinin is localized mainly in mature Z bodies within the nascent myofiber and expression declines as the sarcomeres continue to mature. Also expressed in kidney.

It localises to the nucleus. Its subcellular location is the cytoplasm. The protein resides in the cytoplasmic ribonucleoprotein granule. Its function is as follows. RNA-binding protein that acts as a regulator of mRNA splicing of a subset of genes encoding key structural proteins involved in cardiac development, such as TTN (Titin), CACNA1C, CAMK2D or PDLIM5/ENH. Acts as a repressor of mRNA splicing: specifically binds the 5'UCUU-3' motif that is predominantly found within intronic sequences of pre-mRNAs, leading to the exclusion of specific exons in target transcripts. RBM20-mediated exon skipping is hormone-dependent and is essential for TTN isoform transition in both cardiac and skeletal muscles. RBM20-mediated exon skipping of TTN provides substrates for the formation of circular RNA (circRNAs) from the TTN transcripts. Together with RBM24, promotes the expression of short isoforms of PDLIM5/ENH in cardiomyocytes. This Mus musculus (Mouse) protein is RNA-binding protein 20.